The following is a 124-amino-acid chain: UPF0102 protein TM1040_0449 (124 aa).

The protein belongs to the UPF0102 family.

In Ruegeria sp. (strain TM1040) (Silicibacter sp.), this protein is UPF0102 protein TM1040_0449.